A 281-amino-acid polypeptide reads, in one-letter code: NAD kinase (281 aa).

Aspartate 61 serves as the catalytic Proton acceptor. Residues 61–62 (DG), 134–135 (ND), arginine 145, aspartate 164, 175–180 (TAYSLS), and glutamine 234 contribute to the NAD(+) site.

Belongs to the NAD kinase family. A divalent metal cation is required as a cofactor.

The protein localises to the cytoplasm. The enzyme catalyses NAD(+) + ATP = ADP + NADP(+) + H(+). Functionally, involved in the regulation of the intracellular balance of NAD and NADP, and is a key enzyme in the biosynthesis of NADP. Catalyzes specifically the phosphorylation on 2'-hydroxyl of the adenosine moiety of NAD to yield NADP. The chain is NAD kinase from Clostridium botulinum (strain ATCC 19397 / Type A).